The primary structure comprises 1485 residues: Chromosome partition protein MukB (1485 aa).

34 to 41 (GGNGAGKS) serves as a coordination point for ATP. Coiled coils occupy residues 337-480 (LNLV…QAYQ) and 509-605 (QHLA…PVWL). The interval 666–783 (PSGAEDARLI…EVPLFGRAAR (118 aa)) is flexible hinge. Coiled coils occupy residues 835–915 (EAEI…IQQH) and 977–1116 (GMLT…AKAG).

The protein belongs to the SMC family. MukB subfamily. In terms of assembly, homodimerization via its hinge domain. Binds to DNA via its C-terminal region. Interacts, and probably forms a ternary complex, with MukE and MukF via its C-terminal region. The complex formation is stimulated by calcium or magnesium. Interacts with tubulin-related protein FtsZ.

Its subcellular location is the cytoplasm. The protein resides in the nucleoid. Its function is as follows. Plays a central role in chromosome condensation, segregation and cell cycle progression. Functions as a homodimer, which is essential for chromosome partition. Involved in negative DNA supercoiling in vivo, and by this means organize and compact chromosomes. May achieve or facilitate chromosome segregation by condensation DNA from both sides of a centrally located replisome during cell division. The sequence is that of Chromosome partition protein MukB from Yersinia pseudotuberculosis serotype IB (strain PB1/+).